Reading from the N-terminus, the 745-residue chain is Cellulose synthase 1 catalytic subunit [UDP-forming] (745 aa).

The next 3 helical transmembrane spans lie at 29-49 (YVVGALGLCALLAATMVTLSL), 106-126 (GILGVTLLLAELYALYMLFLS), and 153-173 (IFIPTYDEALSIVRLTVLGAL). Residues 147–240 (EWPTVDIFIP…HILILDCDHI (94 aa)) form a catalytic subdomain A region. Asp189 is a catalytic residue. The substrate site is built by Asp236 and Asp238. A catalytic subdomain B region spans residues 317–377 (KAIEEIGGFA…GQRMRWARGM (61 aa)). Residue Asp333 is part of the active site. The next 6 helical transmembrane spans lie at 407 to 427 (FFFAIPRVIFLASPLAFLFFS), 430 to 450 (IIAASPLAVGVYAIPHMFHSI), 468 to 488 (VYETVMALFLVRVTIVTMLFP), 515 to 535 (NIIFAIIMALGLLRGLYALIF), 547 to 567 (ALNCIWSVISLIILMAVISVG), and 649 to 669 (AVFTWSISNIQVEAAVVRFVF). One can recognise a PilZ domain in the interval 572–670 (QLRQSHRIEA…EAAVVRFVFG (99 aa)). Over residues 708–717 (IAHSRPKKKP) the composition is skewed to basic residues. Positions 708-745 (IAHSRPKKKPIALPVERREPTTSQGGQKQEGKISRAAS) are disordered. Positions 736-745 (QEGKISRAAS) are enriched in basic and acidic residues.

It belongs to the glycosyltransferase 2 family. Requires Mg(2+) as cofactor.

The protein localises to the cell inner membrane. The catalysed reaction is [(1-&gt;4)-beta-D-glucosyl](n) + UDP-alpha-D-glucose = [(1-&gt;4)-beta-D-glucosyl](n+1) + UDP + H(+). It participates in glycan metabolism; bacterial cellulose biosynthesis. Activated by bis-(3'-5') cyclic diguanylic acid (c-di-GMP). Its function is as follows. Catalytic subunit of cellulose synthase. It polymerizes uridine 5'-diphosphate glucose to cellulose. The thick cellulosic mats generated by this enzyme probably provide a specialized protective environment to the bacterium. This chain is Cellulose synthase 1 catalytic subunit [UDP-forming] (bcsAI), found in Komagataeibacter xylinus (Gluconacetobacter xylinus).